The primary structure comprises 295 residues: HTH-type transcriptional regulator TfdS (295 aa).

The 58-residue stretch at 1 to 58 (MEFRQLRYFVAAAEEGNVGAAARRLHISQPPVTRQIHALEQHLGVLLFERSARGVQLT) folds into the HTH lysR-type domain. A DNA-binding region (H-T-H motif) is located at residues 18–37 (VGAAARRLHISQPPVTRQIH).

It belongs to the LysR transcriptional regulatory family.

It is found in the cytoplasm. In terms of biological role, involved in the regulation of 3-chlorocatechol degradation. Transcriptional regulator of tfdB expression. Acts as a repressor in the absence of its effector (either 2-cis-chlorodiene lactone or chloromaleylacetate) but acts as an activator when its effector is present. This Cupriavidus pinatubonensis (strain JMP 134 / LMG 1197) (Cupriavidus necator (strain JMP 134)) protein is HTH-type transcriptional regulator TfdS (tfdS).